A 121-amino-acid polypeptide reads, in one-letter code: Putative RNase MJ1216 (121 aa).

Active-site residues include Arg76 and His81. The short motif at Arg76–Tyr83 is the RX(4)HXY motif element. Residue Tyr83 is modified to O-di-AMP-tyrosine.

This sequence belongs to the HepT RNase toxin family. In terms of assembly, homodimer, probably forms a complex with antitoxin MJ1215 or MJ1217. In terms of processing, modified by antitoxin MJ1215 or MJ1217; probably at least 2 successive AMPylation events occur on Tyr-83.

In terms of biological role, probable toxic component of a putative type VII toxin-antitoxin (TA) system, probably an RNase. Probably neutralized by antitoxin MJ1215 or MJ1217. Neutralization may be due to AMPylation by antitoxin. This chain is Putative RNase MJ1216, found in Methanocaldococcus jannaschii (strain ATCC 43067 / DSM 2661 / JAL-1 / JCM 10045 / NBRC 100440) (Methanococcus jannaschii).